A 1342-amino-acid polypeptide reads, in one-letter code: Zinc finger protein 335 (1342 aa).

Disordered stretches follow at residues 1-102 (MEEN…VTGG) and 201-228 (TSTS…AEEP). Residues 34 to 49 (AVSADSSDAAAAPGQA) are compositionally biased toward low complexity. Residues 201-217 (TSTSTCLEAQGGPSSPV) show a composition bias toward polar residues. The C2H2-type 1 zinc-finger motif lies at 245–268 (FKCKMCQYRSSTKATLLRHMRERH). The segment at 274–442 (AAAAAAGKKG…TLPRRRGRPS (169 aa)) is disordered. A compositionally biased stretch (acidic residues) spans 297–327 (EEGPEEEDDDDIVDAGAIDDLEEDSDYNPAE). A compositionally biased stretch (basic residues) spans 346-357 (RPRRRPGRPRKL). 8 C2H2-type zinc fingers span residues 465–487 (FLCR…VNSH), 495–517 (FKCL…MFNH), 523–545 (YKCD…AAVH), 562–584 (FPCP…MKTH), 590–612 (HMCD…LLTH), 621–643 (FKCE…QLSH), 649–672 (FKCS…AVKH), and 678–701 (FACE…RCRH). Disordered regions lie at residues 732–763 (LKQQ…QSSE) and 964–1013 (CGGL…SAAT). Residues 740–753 (PGPPPSSPGPPEIP) show a composition bias toward pro residues. Phosphoserine is present on residues serine 976, serine 992, and serine 1007. The span at 986 to 997 (SQSSASSPPATS) shows a compositional bias: low complexity. 4 consecutive C2H2-type zinc fingers follow at residues 1019–1041 (FSCK…KRAH), 1047–1069 (FKCP…MAQH), 1075–1097 (HQCS…MLTH), and 1103–1126 (FACH…QRLH). Residue lysine 1022 forms a Glycyl lysine isopeptide (Lys-Gly) (interchain with G-Cter in SUMO2) linkage. An involved in the interaction with CCAR2 region spans residues 1041–1342 (HAGPGAFKCP…EYDVITLADD (302 aa)). Phosphoserine is present on serine 1153.

It belongs to the krueppel C2H2-type zinc-finger protein family. In terms of assembly, interacts with NCOA6; may enhance ligand-dependent transcriptional activation by nuclear hormone receptors. Interacts with CNOT6. Interacts with CNOT9; the interaction is direct. Component of a nuclear receptor-mediated transcription complex composed of at least ZNF335, CCAR2 and EMSY; the complex stimulates the transcription of nuclear receptor target genes such as SOX9 and HOXA1. Within the complex interacts with EMSY and interacts (via C-terminus) with CCAR2. Interacts with members of histone H3'Lys4'(H3K4) methyltransferase complexes ASH2L, CXXC1, KMT2A/MLL1, RBBP5, SETD1A and WDR5. Component of a histone methylation complex composed of at least ZNF335, RBBP5, ASH2L and WDR5; the complex may have histone H3-specific methyltransferase activity, however does not have specificity for 'Lys-4' of histone H3. Interacts with RBBP5 and WDR5. Interacts with ASHL2. Components of this complex may associate with components of the ZNF335-CCAR2-EMSY nuclear receptor-mediated transcription complex to form a complex at least composed of ZNF335, HCFC1, CCAR2, EMSY, MKI67, RBBP5, ASH2L and WDR5. Within this complex also interacts with HCFC1 and MKI67. Ubiquitously expressed.

Its subcellular location is the nucleus. Component or associated component of some histone methyltransferase complexes may regulate transcription through recruitment of those complexes on gene promoters. Enhances ligand-dependent transcriptional activation by nuclear hormone receptors. Plays an important role in neural progenitor cell proliferation and self-renewal through the regulation of specific genes involved brain development, including REST. Also controls the expression of genes involved in somatic development and regulates, for instance, lymphoblast proliferation. The chain is Zinc finger protein 335 (ZNF335) from Homo sapiens (Human).